The following is an 82-amino-acid chain: U-actitoxin-Oulsp2 (82 aa).

Residues 1–21 (MNTKLVVVFLLSAILFVSVTA) form the signal peptide. The propeptide occupies 22 to 46 (SRPGKDLERDEAYETYDDERPYFKR). A ShKT domain is found at 48–82 (CKDNLPAATCSNVKANNNCSSEKYKTNCAKTCGEC). Cystine bridges form between Cys48–Cys82, Cys57–Cys75, and Cys66–Cys79. The theoritically crucial for binding to potassium channels stretch occupies residues 70–71 (KY).

The protein belongs to the sea anemone type 1 potassium channel toxin family. Type 1b subfamily.

It is found in the secreted. The protein resides in the nematocyst. Probable toxin with unknown function. In contrast to similar toxins, this toxin does not inhibit voltage-gated potassium channels (tested at 100 nM). Does not show antimicrobial activities against bacteria and yeasts. The protein is U-actitoxin-Oulsp2 of Oulactis sp. (Sea anemone).